The primary structure comprises 450 residues: MGKYFGTDGVRGEANLELTPELAFKLGRFGGYVLSQHETEAPKVFVGRDTRISGEMLESALVAGLLSVGIHVYKLGVLATPAVAYLVETEGASAGVMISASHNPALDNGIKFFGGDGFKLDDEKEAEIEALLDAEEDTLPRPSAEGLGILVDYPEGLRKYEGYLVSTGTPLDGMKVALDTANGAASTSARQIFADLGAQLTVIGETPDGLNINLNVGSTHPEALQEVVKESGSAIGLAFDGDSDRLIAVDENGDIVDGDKIMYIIGKYLSEKGQLAQNTIVTTVMSNLGFHKALNREGINKAVTAVGDRYVVEEMRKSGYNLGGEQSGHVILMDYNTTGDGQLSAVQLTKIMKETGKSLSELAAEVTIYPQKLVNIRVENVMKEKAMEVPAIKVIIEKMEEEMAGNGRILVRPSGTEPLLRVMAEAPTTEEVDYYVDTITDVVRAEIGID.

Residue Ser101 is the Phosphoserine intermediate of the active site. Mg(2+)-binding residues include Ser101, Asp240, Asp242, and Asp244. Ser101 is modified (phosphoserine).

This sequence belongs to the phosphohexose mutase family. The cofactor is Mg(2+). Activated by phosphorylation.

The enzyme catalyses alpha-D-glucosamine 1-phosphate = D-glucosamine 6-phosphate. Its function is as follows. Catalyzes the conversion of glucosamine-6-phosphate to glucosamine-1-phosphate. The protein is Phosphoglucosamine mutase of Streptococcus pneumoniae (strain Hungary19A-6).